The chain runs to 101 residues: Putative defensin-like protein 86 (101 aa).

The N-terminal stretch at 1 to 27 (MAITKMSSLIILSLMMLTFIYIPMISG) is a signal peptide. 4 disulfides stabilise this stretch: C35–C71, C39–C59, C45–C69, and C49–C70.

This sequence belongs to the DEFL family.

It localises to the secreted. In Arabidopsis thaliana (Mouse-ear cress), this protein is Putative defensin-like protein 86 (LCR82).